The sequence spans 278 residues: F-box only protein 17 (278 aa).

In terms of domain architecture, F-box spans 15–62; sequence SLALDALPPELLVQVLSHVPPRSLVTRCRPVCRAWRDIVDGPTVWLLQ. The FBA domain occupies 99–275; that stretch reads YCLRAPFGRN…VTHSSVRVRI (177 aa).

In terms of assembly, part of a SCF (SKP1-cullin-F-box) protein ligase complex. Interacts with SKP1 and CUL1. As to expression, expressed in heart, skeletal muscle, liver and kidney. Expressed at lower levels in spleen and brain.

In terms of biological role, substrate-recognition component of the SCF (SKP1-CUL1-F-box protein)-type E3 ubiquitin ligase complex. Able to recognize and bind denatured glycoproteins, which are modified with complex-type oligosaccharides. Also recognizes sulfated glycans. Does not bind high-mannose glycoproteins. The protein is F-box only protein 17 (FBXO17) of Homo sapiens (Human).